The chain runs to 469 residues: 24-hydroxycholesterol 7-alpha-hydroxylase (469 aa).

The signal sequence occupies residues methionine 1–arginine 23. 3 helical membrane-spanning segments follow: residues glycine 267–alanine 287, valine 352–leucine 372, and phenylalanine 412–leucine 432. Residue cysteine 414 coordinates heme.

It belongs to the cytochrome P450 family. Heme serves as cofactor. Liver specific.

Its subcellular location is the endoplasmic reticulum membrane. It is found in the microsome membrane. It carries out the reaction (24S)-hydroxycholesterol + reduced [NADPH--hemoprotein reductase] + O2 = (24S)-7alpha-dihydroxycholesterol + oxidized [NADPH--hemoprotein reductase] + H2O + H(+). It participates in steroid metabolism; cholesterol degradation. Its pathway is lipid metabolism; bile acid biosynthesis. A cytochrome P450 monooxygenase involved in neural cholesterol clearance through bile acid synthesis. Catalyzes 7-alpha hydroxylation of (24S)-hydroxycholesterol, a neural oxysterol that is metabolized to bile acids in the liver. Mechanistically, uses molecular oxygen inserting one oxygen atom into a substrate, and reducing the second into a water molecule, with two electrons provided by NADPH via cytochrome P450 reductase (CPR; NADPH-ferrihemoprotein reductase). The sequence is that of 24-hydroxycholesterol 7-alpha-hydroxylase from Homo sapiens (Human).